Here is a 514-residue protein sequence, read N- to C-terminus: Major facilitator superfamily domain-containing protein 4A (514 aa).

The next 5 helical transmembrane spans lie at 19 to 39 (LTYWSVFFSFGLCIAFLGPTL), 53 to 73 (ISWVFLSQQLCLLLGSALGGV), 82 to 102 (LWALFTSSLAISLVFAVIPFC), 107 to 127 (VLALVMALAGLAMGCIDTVAN), and 139 to 159 (AVFLQVLHFFVGFGALLSPLI). N-linked (GlcNAc...) asparagine glycans are attached at residues Asn-177 and Asn-203. Helical transmembrane passes span 221–241 (YAFWIMALINLPVPMAVLMLL), 307–327 (FFAIHITAALVLFMTDGLTGA), 347–367 (VAGYLPSLFWGFITLGRLLSI), 376–396 (ATMVFINVVGVVVTFLVLLIF), 400–420 (VVFLFVGTASLGLFLSSTFPS), 438–458 (VLVTGAGVGEMVLQMLVGSIF), and 466–486 (FLVCGVIFGCLAFTFYILLLF).

It belongs to the major facilitator superfamily.

It localises to the membrane. The sequence is that of Major facilitator superfamily domain-containing protein 4A (MFSD4A) from Pongo abelii (Sumatran orangutan).